A 166-amino-acid chain; its full sequence is Regulator of ribonuclease activity A (166 aa).

The protein belongs to the RraA family. Homotrimer. Binds to both RNA-binding sites in the C-terminal region of Rne and to RhlB.

Its subcellular location is the cytoplasm. In terms of biological role, globally modulates RNA abundance by binding to RNase E (Rne) and regulating its endonucleolytic activity. Can modulate Rne action in a substrate-dependent manner by altering the composition of the degradosome. Modulates RNA-binding and helicase activities of the degradosome. The chain is Regulator of ribonuclease activity A from Actinobacillus succinogenes (strain ATCC 55618 / DSM 22257 / CCUG 43843 / 130Z).